Here is a 226-residue protein sequence, read N- to C-terminus: Cytochrome c oxidase subunit 2 (226 aa).

At 1 to 14 the chain is on the mitochondrial intermembrane side; the sequence is MAYPLQLGLQDATS. Residues 15–45 form a helical membrane-spanning segment; sequence PIMEELTSFHDHTLMIVFLISTLVLYIISLM. The Mitochondrial matrix segment spans residues 46–59; the sequence is LTTKLTHTSTMDAQ. The chain crosses the membrane as a helical span at residues 60–87; the sequence is EIETIWTILPAIILIMIALPSLRVLYMM. Residues 88–226 lie on the Mitochondrial intermembrane side of the membrane; it reads DEINNPALTV…KYFEAWSASM (139 aa). Positions 161, 196, 198, 200, 204, and 207 each coordinate Cu cation. Residue Glu-198 coordinates Mg(2+). Tyr-218 bears the Phosphotyrosine mark.

Belongs to the cytochrome c oxidase subunit 2 family. Component of the cytochrome c oxidase (complex IV, CIV), a multisubunit enzyme composed of 14 subunits. The complex is composed of a catalytic core of 3 subunits MT-CO1, MT-CO2 and MT-CO3, encoded in the mitochondrial DNA, and 11 supernumerary subunits COX4I, COX5A, COX5B, COX6A, COX6B, COX6C, COX7A, COX7B, COX7C, COX8 and NDUFA4, which are encoded in the nuclear genome. The complex exists as a monomer or a dimer and forms supercomplexes (SCs) in the inner mitochondrial membrane with NADH-ubiquinone oxidoreductase (complex I, CI) and ubiquinol-cytochrome c oxidoreductase (cytochrome b-c1 complex, complex III, CIII), resulting in different assemblies (supercomplex SCI(1)III(2)IV(1) and megacomplex MCI(2)III(2)IV(2)). Found in a complex with TMEM177, COA6, COX18, COX20, SCO1 and SCO2. Interacts with TMEM177 in a COX20-dependent manner. Interacts with COX20. Interacts with COX16. Requires Cu cation as cofactor.

The protein resides in the mitochondrion inner membrane. It catalyses the reaction 4 Fe(II)-[cytochrome c] + O2 + 8 H(+)(in) = 4 Fe(III)-[cytochrome c] + 2 H2O + 4 H(+)(out). In terms of biological role, component of the cytochrome c oxidase, the last enzyme in the mitochondrial electron transport chain which drives oxidative phosphorylation. The respiratory chain contains 3 multisubunit complexes succinate dehydrogenase (complex II, CII), ubiquinol-cytochrome c oxidoreductase (cytochrome b-c1 complex, complex III, CIII) and cytochrome c oxidase (complex IV, CIV), that cooperate to transfer electrons derived from NADH and succinate to molecular oxygen, creating an electrochemical gradient over the inner membrane that drives transmembrane transport and the ATP synthase. Cytochrome c oxidase is the component of the respiratory chain that catalyzes the reduction of oxygen to water. Electrons originating from reduced cytochrome c in the intermembrane space (IMS) are transferred via the dinuclear copper A center (CU(A)) of subunit 2 and heme A of subunit 1 to the active site in subunit 1, a binuclear center (BNC) formed by heme A3 and copper B (CU(B)). The BNC reduces molecular oxygen to 2 water molecules using 4 electrons from cytochrome c in the IMS and 4 protons from the mitochondrial matrix. This chain is Cytochrome c oxidase subunit 2 (MT-CO2), found in Perognathus flavus (Silky pocket mouse).